Here is a 345-residue protein sequence, read N- to C-terminus: D-fructose 1,6-bisphosphatase class 2/sedoheptulose 1,7-bisphosphatase (345 aa).

Positions 33, 57, 97, and 100 each coordinate Mn(2+). Substrate contacts are provided by residues 100-102 (EGT), Tyr131, 176-178 (RDR), and 198-200 (DGD). Glu225 lines the Mn(2+) pocket.

The protein belongs to the FBPase class 2 family. In terms of assembly, homotetramer. It depends on Mn(2+) as a cofactor.

The catalysed reaction is beta-D-fructose 1,6-bisphosphate + H2O = beta-D-fructose 6-phosphate + phosphate. The enzyme catalyses D-sedoheptulose 1,7-bisphosphate + H2O = D-sedoheptulose 7-phosphate + phosphate. It functions in the pathway carbohydrate biosynthesis; Calvin cycle. Its function is as follows. Catalyzes the hydrolysis of fructose 1,6-bisphosphate (Fru 1,6-P2) and sedoheptulose 1,7-bisphosphate (Sed 1,7-P2) to fructose 6-phosphate and sedoheptulose 7-phosphate, respectively. This Nostoc sp. (strain PCC 7120 / SAG 25.82 / UTEX 2576) protein is D-fructose 1,6-bisphosphatase class 2/sedoheptulose 1,7-bisphosphatase.